The sequence spans 620 residues: DNA mismatch repair protein MutL (620 aa).

Belongs to the DNA mismatch repair MutL/HexB family.

Functionally, this protein is involved in the repair of mismatches in DNA. It is required for dam-dependent methyl-directed DNA mismatch repair. May act as a 'molecular matchmaker', a protein that promotes the formation of a stable complex between two or more DNA-binding proteins in an ATP-dependent manner without itself being part of a final effector complex. In Clostridium tetani (strain Massachusetts / E88), this protein is DNA mismatch repair protein MutL.